The following is a 101-amino-acid chain: Small ribosomal subunit protein uS14 (101 aa).

Belongs to the universal ribosomal protein uS14 family. Part of the 30S ribosomal subunit. Contacts proteins S3 and S10.

Functionally, binds 16S rRNA, required for the assembly of 30S particles and may also be responsible for determining the conformation of the 16S rRNA at the A site. This is Small ribosomal subunit protein uS14 from Polaromonas sp. (strain JS666 / ATCC BAA-500).